A 630-amino-acid chain; its full sequence is Betaine/ectoine transporter LcoP (630 aa).

Residues 1 to 13 (MSTNSGNNLPESQ) show a composition bias toward polar residues. Positions 1-28 (MSTNSGNNLPESQESPEEPHYPHDTHPG) are disordered. A compositionally biased stretch (basic and acidic residues) spans 17-26 (EEPHYPHDTH). The next 12 membrane-spanning stretches (helical) occupy residues 47 to 67 (TVFGVTAALILAFIAWGISSP), 85 to 105 (TGWLLNFVMLIGIGTMLYIAF), 125 to 145 (FSWIAMMFGAGIGVGIFFFGP), 177 to 197 (FHWGLSAWGLYALVGGALAYS), 230 to 250 (MAIIATLFGTAATLGLSAIQV), 267 to 287 (ILIAIIAILTIGFIISSVSGV), 299 to 319 (ISLTLGLVLFVFITGPTLFLL), 354 to 374 (WTAFYWAWWIAWTPFVGMFIA), 385 to 405 (FALITMAIPSFILILAFTIFG), 436 to 456 (LPLYSITPFILIFVLAVFFVT), 479 to 499 (LIVVFWGLCMMGIAVVMLLTG), and 510 to 530 (LTILIAIPFALVLIVMAIAFI). The segment at 611 to 630 (WADGWTPESTEEGEVDAKKD) is disordered.

This sequence belongs to the BCCT transporter (TC 2.A.15) family.

The protein localises to the cell membrane. Its activity is regulated as follows. Uptake is activated by hyperosmotic stress. Shows a small but significant chill stimulation around 15 degrees Celsius. Functionally, involved in the uptake of osmoprotectants. Can transport betaine and ectoine. Na(+) is probably the coupling ion. The protein is Betaine/ectoine transporter LcoP of Corynebacterium glutamicum (strain ATCC 13032 / DSM 20300 / JCM 1318 / BCRC 11384 / CCUG 27702 / LMG 3730 / NBRC 12168 / NCIMB 10025 / NRRL B-2784 / 534).